The chain runs to 267 residues: Cyclin-C (267 aa).

Residues I48–I151 enclose the Cyclin N-terminal domain.

The protein belongs to the cyclin family. Cyclin C subfamily. In terms of assembly, component of the Cdk8 module of the Mediator complex.

The protein resides in the nucleus. Its function is as follows. Component of the Mediator complex, a coactivator involved in regulated gene transcription of nearly all RNA polymerase II-dependent genes. Mediator functions as a bridge to convey information from gene-specific regulatory proteins to the basal RNA polymerase II transcription machinery. Mediator is recruited to promoters by direct interactions with regulatory proteins and serves as a scaffold for the assembly of a functional preinitiation complex with RNA polymerase II and the general transcription factors. Binds to and activates cyclin-dependent kinase Cdk8 that phosphorylates the CTD (C-terminal domain) of the large subunit of RNA polymerase II (RNAp II), which may inhibit the formation of a transcription initiation complex. This is Cyclin-C (CycC) from Drosophila pseudoobscura pseudoobscura (Fruit fly).